The sequence spans 131 residues: Translation initiation factor 5A (131 aa).

Hypusine is present on Lys-36.

Belongs to the eIF-5A family.

The protein resides in the cytoplasm. Functions by promoting the formation of the first peptide bond. This Saccharolobus solfataricus (strain ATCC 35092 / DSM 1617 / JCM 11322 / P2) (Sulfolobus solfataricus) protein is Translation initiation factor 5A.